The chain runs to 643 residues: Threonine--tRNA ligase (643 aa).

The 61-residue stretch at 1–61 folds into the TGS domain; it reads MPTIKFIDGT…TNDSIVKFVY (61 aa). The catalytic stretch occupies residues 244–535; the sequence is DHRKISKILD…LIEEYIGNFP (292 aa). Residues C335, H386, and H512 each coordinate Zn(2+).

The protein belongs to the class-II aminoacyl-tRNA synthetase family. Homodimer. Zn(2+) is required as a cofactor.

The protein resides in the cytoplasm. It carries out the reaction tRNA(Thr) + L-threonine + ATP = L-threonyl-tRNA(Thr) + AMP + diphosphate + H(+). In terms of biological role, catalyzes the attachment of threonine to tRNA(Thr) in a two-step reaction: L-threonine is first activated by ATP to form Thr-AMP and then transferred to the acceptor end of tRNA(Thr). Also edits incorrectly charged L-seryl-tRNA(Thr). This Buchnera aphidicola subsp. Baizongia pistaciae (strain Bp) protein is Threonine--tRNA ligase.